Consider the following 120-residue polypeptide: NAD(P)H-quinone oxidoreductase subunit 3, chloroplastic (120 aa).

3 consecutive transmembrane segments (helical) span residues 9–29 (IFWA…LISG), 64–84 (MFAL…PWAM), and 88–108 (VLGV…IVGL).

The protein belongs to the complex I subunit 3 family. In terms of assembly, NDH is composed of at least 16 different subunits, 5 of which are encoded in the nucleus.

The protein localises to the plastid. Its subcellular location is the chloroplast thylakoid membrane. It carries out the reaction a plastoquinone + NADH + (n+1) H(+)(in) = a plastoquinol + NAD(+) + n H(+)(out). The catalysed reaction is a plastoquinone + NADPH + (n+1) H(+)(in) = a plastoquinol + NADP(+) + n H(+)(out). Functionally, NDH shuttles electrons from NAD(P)H:plastoquinone, via FMN and iron-sulfur (Fe-S) centers, to quinones in the photosynthetic chain and possibly in a chloroplast respiratory chain. The immediate electron acceptor for the enzyme in this species is believed to be plastoquinone. Couples the redox reaction to proton translocation, and thus conserves the redox energy in a proton gradient. This chain is NAD(P)H-quinone oxidoreductase subunit 3, chloroplastic, found in Ranunculus macranthus (Large buttercup).